The primary structure comprises 96 residues: Protein RnfH (96 aa).

The protein belongs to the UPF0125 (RnfH) family.

The sequence is that of Protein RnfH from Escherichia coli O17:K52:H18 (strain UMN026 / ExPEC).